The following is an 830-amino-acid chain: Periplasmic nitrate reductase 2 (830 aa).

Positions 1–31 (MKVSRRKFIKAQAVASAAAAAGISIPISASN) form a signal peptide, tat-type signal. In terms of domain architecture, 4Fe-4S Mo/W bis-MGD-type spans 41-97 (ITWEKAPCRFCGTGCSVNVGTKEGKVVATHGDIKSPVNRGLNCVKGYFLSKIMYGKD). [4Fe-4S] cluster is bound by residues Cys-48, Cys-51, Cys-55, and Cys-83. Mo-bis(molybdopterin guanine dinucleotide)-binding positions include Lys-85, Gln-152, Asn-177, Cys-181, 245-249 (STFEH), 264-266 (QSD), Met-374, Gln-378, Asn-484, 510-511 (SE), Lys-533, Asp-560, and 720-729 (TGRVIEHWHS). Trp-796 serves as a coordination point for substrate. 2 residues coordinate Mo-bis(molybdopterin guanine dinucleotide): Asn-804 and Lys-821.

Belongs to the prokaryotic molybdopterin-containing oxidoreductase family. NasA/NapA/NarB subfamily. As to quaternary structure, component of the periplasmic nitrate reductase NapAB complex composed of NapA and NapB. It depends on [4Fe-4S] cluster as a cofactor. Mo-bis(molybdopterin guanine dinucleotide) is required as a cofactor. Predicted to be exported by the Tat system. The position of the signal peptide cleavage has not been experimentally proven.

It is found in the periplasm. It carries out the reaction 2 Fe(II)-[cytochrome] + nitrate + 2 H(+) = 2 Fe(III)-[cytochrome] + nitrite + H2O. Functionally, catalytic subunit of the periplasmic nitrate reductase complex NapAB. Receives electrons from NapB and catalyzes the reduction of nitrate to nitrite. The polypeptide is Periplasmic nitrate reductase 2 (Photobacterium profundum (strain SS9)).